The primary structure comprises 701 residues: Polyribonucleotide nucleotidyltransferase (701 aa).

The Mg(2+) site is built by D485 and D491. Positions 552–611 constitute a KH domain; the sequence is PRIIKIRINPEKIRDVIGKGGAVIRALTEETGTTIDITDDGTVMIACVNAEGGELAKKRI. In terms of domain architecture, S1 motif spans 621–689; that stretch reads GRVYDGTVLK…DKGRLRLSMK (69 aa).

The protein belongs to the polyribonucleotide nucleotidyltransferase family. Requires Mg(2+) as cofactor.

Its subcellular location is the cytoplasm. It carries out the reaction RNA(n+1) + phosphate = RNA(n) + a ribonucleoside 5'-diphosphate. In terms of biological role, involved in mRNA degradation. Catalyzes the phosphorolysis of single-stranded polyribonucleotides processively in the 3'- to 5'-direction. This is Polyribonucleotide nucleotidyltransferase from Nitrosospira multiformis (strain ATCC 25196 / NCIMB 11849 / C 71).